We begin with the raw amino-acid sequence, 226 residues long: MIDKDYIAELKALDDNKEAKAKLAEYAEQFGIKVKKNKSFDNIVVDIEEALQKLASEPMPETDGLSIKDLIDAADAAEGLKYDDEEVNPEAALLIDSPIKSDIKIEVVETDKIPENTDVLIEDTPFVEEKFEQAVAEIIESEKPSVFTLPENFSPNLQLIGKNLGFCTVPWWIYQWIAETPDWKSHPTSFEHASAHQTLFSLIYYINRDGSVLIRETRNSSFVTLK.

The protein localises to the virion. Its function is as follows. Inhibitor of the prohead protease gp21. Minor capsid protein. The chain is Protein inh (inh) from Escherichia coli (Bacteriophage T4).